The following is a 245-amino-acid chain: MLIIPAIDLKDGACVRLRQGRMEDSTVFSDDPVSMAAKWVEGGCRRLHLVDLNGAFEGQPVNGEVVTAIAKRYPNLPIQIGGGIRSLETIEHYVKAGVSYVIIGTKAVKQPEFVAEACKAFPGKVIVGLDAKDGFVATDGWAEVSSVQVIDLAKRFEADGVSAIVYTDIAKDGMMQGCNVPFTKALAEATRIPVIASGGIHNLGDIKALLDAKAPGIIGAITGRAIYEGTLDVAEAQAFCDNYQG.

Aspartate 8 serves as the catalytic Proton acceptor. Aspartate 130 serves as the catalytic Proton donor.

The protein belongs to the HisA/HisF family.

It is found in the cytoplasm. The enzyme catalyses 1-(5-phospho-beta-D-ribosyl)-5-[(5-phospho-beta-D-ribosylamino)methylideneamino]imidazole-4-carboxamide = 5-[(5-phospho-1-deoxy-D-ribulos-1-ylimino)methylamino]-1-(5-phospho-beta-D-ribosyl)imidazole-4-carboxamide. It participates in amino-acid biosynthesis; L-histidine biosynthesis; L-histidine from 5-phospho-alpha-D-ribose 1-diphosphate: step 4/9. The polypeptide is 1-(5-phosphoribosyl)-5-[(5-phosphoribosylamino)methylideneamino] imidazole-4-carboxamide isomerase (Pseudomonas putida (strain ATCC 47054 / DSM 6125 / CFBP 8728 / NCIMB 11950 / KT2440)).